Consider the following 157-residue polypeptide: Peptide methionine sulfoxide reductase MsrA (157 aa).

Cys-13 is an active-site residue.

This sequence belongs to the MsrA Met sulfoxide reductase family.

The catalysed reaction is L-methionyl-[protein] + [thioredoxin]-disulfide + H2O = L-methionyl-(S)-S-oxide-[protein] + [thioredoxin]-dithiol. It catalyses the reaction [thioredoxin]-disulfide + L-methionine + H2O = L-methionine (S)-S-oxide + [thioredoxin]-dithiol. Its function is as follows. Has an important function as a repair enzyme for proteins that have been inactivated by oxidation. Catalyzes the reversible oxidation-reduction of methionine sulfoxide in proteins to methionine. The sequence is that of Peptide methionine sulfoxide reductase MsrA from Methanococcus maripaludis (strain C5 / ATCC BAA-1333).